Consider the following 68-residue polypeptide: Guanine nucleotide-binding protein G(I)/G(S)/G(O) subunit gamma-5 (68 aa).

N-acetylserine is present on Ser-2. Phosphoserine is present on Ser-2. Cys-65 carries the cysteine methyl ester modification. Residue Cys-65 is the site of S-geranylgeranyl cysteine attachment. A propeptide spans 66 to 68 (SFL) (removed in mature form).

The protein belongs to the G protein gamma family. As to quaternary structure, g proteins are composed of 3 units, alpha, beta and gamma. As to expression, expressed in a variety of tissues.

Its subcellular location is the cell membrane. Functionally, guanine nucleotide-binding proteins (G proteins) are involved as a modulator or transducer in various transmembrane signaling systems. The beta and gamma chains are required for the GTPase activity, for replacement of GDP by GTP, and for G protein-effector interaction. This is Guanine nucleotide-binding protein G(I)/G(S)/G(O) subunit gamma-5 (GNG5) from Bos taurus (Bovine).